We begin with the raw amino-acid sequence, 1476 residues long: ABC-type transporter FG02316 (1476 aa).

N2 is a glycosylation site (N-linked (GlcNAc...) asparagine). A run of 10 helical transmembrane segments spans residues 23 to 43 (FTLL…LLLA), 64 to 84 (WLYC…AFLV), 97 to 117 (SLPA…LSYV), 156 to 176 (AAIT…AETI), 266 to 286 (ILFI…QPFL), 305 to 325 (QGYG…VTTG), 384 to 404 (VWAN…QLGL), 407 to 427 (LIPV…VSFV), 485 to 505 (LLIW…VLSF), and 532 to 552 (LFAL…SFMG). Residues 274–552 (LCFIGFTFCQ…FVTSLSSFMG (279 aa)) form the ABC transmembrane type-1 1 domain. Residues 586–615 (ISGVSSSEEKHPVSPIQESMMKTEPSGDSP) form a disordered region. The ABC transporter 1 domain maps to 622–847 (IRNASFGYDR…SDNYVSHSDV (226 aa)). N-linked (GlcNAc...) asparagine glycosylation is present at N624. 654–661 (GPVGSGKS) is an ATP binding site. Residues N682, N696, N798, and N836 are each glycosylated (N-linked (GlcNAc...) asparagine). A disordered region spans residues 842–870 (VSHSDVSSPDGARSKAPSSGPASSSAPVP). Residues 855-870 (SKAPSSGPASSSAPVP) are compositionally biased toward low complexity. The next 6 helical transmembrane spans lie at 906–926 (MNAI…AYIF), 950–970 (LGYY…FLVL), 1021–1041 (LIDM…VLCI), 1045–1065 (ILIA…LATL), 1137–1157 (WLTL…VVLV), and 1167–1187 (GLIG…KLLM). An ABC transmembrane type-1 2 domain is found at 916–1195 (VFVLAICAYI…LMTFWTTLET (280 aa)). Residues 1232–1464 (ILFDQVSAGY…GPDASTFASM (233 aa)) enclose the ABC transporter 2 domain. Residue N1250 is glycosylated (N-linked (GlcNAc...) asparagine). Position 1265 to 1272 (1265 to 1272 (GRTGSGKS)) interacts with ATP. A glycan (N-linked (GlcNAc...) asparagine) is linked at N1414.

The protein belongs to the ABC transporter superfamily. ABCC family. Conjugate transporter (TC 3.A.1.208) subfamily.

Its subcellular location is the cell membrane. Functionally, ABC-type transporter; part of the gene cluster that mediates the biosynthesis of the fusahexin, a cyclic hydrophobic hexapeptide with the amino acid sequence cyclo-(D-Ala-L-Leu-D-allo-Thr-L-Pro-D-Leu-L-Leu) that plays an important role in cell surface hydrophobicity. The protein is ABC-type transporter FG02316 of Gibberella zeae (strain ATCC MYA-4620 / CBS 123657 / FGSC 9075 / NRRL 31084 / PH-1) (Wheat head blight fungus).